Consider the following 303-residue polypeptide: Elongation factor Ts (303 aa).

Residues 81–84 (TDFV) are involved in Mg(2+) ion dislocation from EF-Tu.

Belongs to the EF-Ts family.

It localises to the cytoplasm. Functionally, associates with the EF-Tu.GDP complex and induces the exchange of GDP to GTP. It remains bound to the aminoacyl-tRNA.EF-Tu.GTP complex up to the GTP hydrolysis stage on the ribosome. This is Elongation factor Ts from Mesomycoplasma hyopneumoniae (strain 7448) (Mycoplasma hyopneumoniae).